The following is a 99-amino-acid chain: Small ribosomal subunit protein bS20 (99 aa).

This sequence belongs to the bacterial ribosomal protein bS20 family.

Functionally, binds directly to 16S ribosomal RNA. This Synechococcus sp. (strain CC9311) protein is Small ribosomal subunit protein bS20.